A 266-amino-acid polypeptide reads, in one-letter code: ATP synthase subunit a (266 aa).

The next 7 membrane-spanning stretches (helical) occupy residues 41–61, 98–118, 119–139, 152–172, 178–198, 216–236, and 237–257; these read IDTLIMSFGLGALFCYVFWLA, VIAPLALTIFCWVFLSNLMDL, VPIDMVPSIMMAVGVDYWKIL, LSVLALIIIYGVMGQGVGGWL, HPLGPWLAPANLILNIVEFIA, LVFILISLLPWWIQWALGTPW, and AIFHILVVPLQAFIFMMLTVV.

Belongs to the ATPase A chain family. In terms of assembly, F-type ATPases have 2 components, CF(1) - the catalytic core - and CF(0) - the membrane proton channel. CF(1) has five subunits: alpha(3), beta(3), gamma(1), delta(1), epsilon(1). CF(0) has three main subunits: a(1), b(2) and c(9-12). The alpha and beta chains form an alternating ring which encloses part of the gamma chain. CF(1) is attached to CF(0) by a central stalk formed by the gamma and epsilon chains, while a peripheral stalk is formed by the delta and b chains.

It localises to the cell inner membrane. Functionally, key component of the proton channel; it plays a direct role in the translocation of protons across the membrane. In Halorhodospira halophila (strain DSM 244 / SL1) (Ectothiorhodospira halophila (strain DSM 244 / SL1)), this protein is ATP synthase subunit a.